Here is a 356-residue protein sequence, read N- to C-terminus: Cyanide hydratase (356 aa).

The 280-residue stretch at 6-285 (YKAAAVTSEP…DGLLFVDIDL (280 aa)) folds into the CN hydrolase domain. E46 functions as the Proton acceptor in the catalytic mechanism. Residue K128 is part of the active site. The active-site Nucleophile is C163.

The protein belongs to the carbon-nitrogen hydrolase superfamily. Nitrilase family. As to quaternary structure, oligomer of dimers, forming left-handed helical fibers.

The enzyme catalyses formamide = hydrogen cyanide + H2O. In terms of biological role, catalyzes the hydration of cyanide to formamide. Degradation of cyanide may be important for plant pathogenic fungi in infection of cyanogenic plants. The sequence is that of Cyanide hydratase from Leptosphaeria maculans (Blackleg fungus).